The following is a 154-amino-acid chain: 6,7-dimethyl-8-ribityllumazine synthase (154 aa).

5-amino-6-(D-ribitylamino)uracil contacts are provided by residues Phe-26, 60–62 (ALE), and 84–86 (CII). 89 to 90 (ET) lines the (2S)-2-hydroxy-3-oxobutyl phosphate pocket. The active-site Proton donor is the His-92. Residue Asn-117 coordinates 5-amino-6-(D-ribitylamino)uracil. (2S)-2-hydroxy-3-oxobutyl phosphate is bound at residue Arg-131.

It belongs to the DMRL synthase family.

It carries out the reaction (2S)-2-hydroxy-3-oxobutyl phosphate + 5-amino-6-(D-ribitylamino)uracil = 6,7-dimethyl-8-(1-D-ribityl)lumazine + phosphate + 2 H2O + H(+). It participates in cofactor biosynthesis; riboflavin biosynthesis; riboflavin from 2-hydroxy-3-oxobutyl phosphate and 5-amino-6-(D-ribitylamino)uracil: step 1/2. In terms of biological role, catalyzes the formation of 6,7-dimethyl-8-ribityllumazine by condensation of 5-amino-6-(D-ribitylamino)uracil with 3,4-dihydroxy-2-butanone 4-phosphate. This is the penultimate step in the biosynthesis of riboflavin. The protein is 6,7-dimethyl-8-ribityllumazine synthase of Acidovorax sp. (strain JS42).